The following is a 571-amino-acid chain: Apolipoprotein N-acyltransferase (571 aa).

The next 6 membrane-spanning stretches (helical) occupy residues 13 to 33 (VVLW…IALV), 51 to 68 (LYAA…GLRY), 72 to 92 (LMFL…VLFI), 118 to 138 (LVAA…FTGI), 152 to 172 (MLIQ…IVCV), and 199 to 219 (LVTA…SMNA). Residues 234 to 527 (NELTVYEQDI…SDVIYAQPRR (294 aa)) form the CN hydrolase domain. The active-site Proton acceptor is Glu-275. Residue Lys-380 is part of the active site. Residue Cys-430 is the Nucleophile of the active site. The chain crosses the membrane as a helical span at residues 542–562 (AGLMGAATLCGLAWMTFEWLM).

This sequence belongs to the CN hydrolase family. Apolipoprotein N-acyltransferase subfamily.

The protein localises to the cell inner membrane. It carries out the reaction N-terminal S-1,2-diacyl-sn-glyceryl-L-cysteinyl-[lipoprotein] + a glycerophospholipid = N-acyl-S-1,2-diacyl-sn-glyceryl-L-cysteinyl-[lipoprotein] + a 2-acyl-sn-glycero-3-phospholipid + H(+). Its pathway is protein modification; lipoprotein biosynthesis (N-acyl transfer). In terms of biological role, catalyzes the phospholipid dependent N-acylation of the N-terminal cysteine of apolipoprotein, the last step in lipoprotein maturation. The protein is Apolipoprotein N-acyltransferase of Rhodopirellula baltica (strain DSM 10527 / NCIMB 13988 / SH1).